A 211-amino-acid polypeptide reads, in one-letter code: Mitotic spindle assembly checkpoint protein MAD2B (211 aa).

One can recognise an HORMA domain in the interval 13 to 203 (QVVADILCEF…SDILKMQLYV (191 aa)).

In terms of assembly, homooligomer. Interacts with rev1. Interacts with rev3l. Interacts with fzr1 (in complex with the anaphase promoting complex APC). May interact with cdc20.

Its subcellular location is the nucleus. The protein localises to the cytoplasm. It is found in the cytoskeleton. It localises to the spindle. Adapter protein able to interact with different proteins and involved in different biological processes. Mediates the interaction between the error-prone DNA polymerase zeta catalytic subunit rev3l and the inserter polymerase rev1, thereby mediating the second polymerase switching in translesion DNA synthesis. Translesion DNA synthesis releases the replication blockade of replicative polymerases, stalled in presence of DNA lesions. May also play a role in signal transduction in response to DNA damage. May regulate the activation of the anaphase promoting complex APC thereby regulating progression through the cell cycle. Through transcriptional regulation may play a role in epithelial-mesenchymal transdifferentiation. This chain is Mitotic spindle assembly checkpoint protein MAD2B (mad2l2), found in Danio rerio (Zebrafish).